The primary structure comprises 1337 residues: Aldehyde oxidase 4 (1337 aa).

Positions 4–91 (DDLVFAVNGE…GCSITTSDGL (88 aa)) constitute a 2Fe-2S ferredoxin-type domain. Residues Cys-43, Cys-48, Cys-51, Cys-73, Cys-113, Cys-116, Cys-155, and Cys-157 each contribute to the [2Fe-2S] cluster site. Residues 225–409 (LDQTRYHWST…LKVHIPRWIA (185 aa)) enclose the FAD-binding PCMH-type domain. FAD is bound by residues 259 to 266 (LVVGNTGT), 342 to 346 (SIGGN), Asp-358, and Leu-399. Positions 771, 802, and 915 each coordinate Mo-molybdopterin. The active-site Proton acceptor is Glu-1265.

This sequence belongs to the xanthine dehydrogenase family. As to quaternary structure, aldehyde oxidases (AO) are homodimers and heterodimers of AO subunits. [2Fe-2S] cluster serves as cofactor. The cofactor is FAD. Mo-molybdopterin is required as a cofactor. Transcripts expressed at high levels in developing siliques and at low levels in dry seeds.

Its subcellular location is the cytoplasm. The catalysed reaction is indole-3-acetaldehyde + O2 + H2O = (indol-3-yl)acetate + H2O2 + H(+). It catalyses the reaction an aldehyde + O2 + H2O = a carboxylate + H2O2 + H(+). It carries out the reaction benzaldehyde + O2 + H2O = benzoate + H2O2 + H(+). The enzyme catalyses hexanal + O2 + H2O = hexanoate + H2O2 + H(+). The catalysed reaction is 1-naphthaldehyde + O2 + H2O = 1-naphthoate + H2O2 + H(+). It catalyses the reaction vanillin + O2 + H2O = vanillate + H2O2 + H(+). It carries out the reaction malonaldehyde + O2 + H2O = 3-oxopropanoate + H2O2 + H(+). The enzyme catalyses citral + O2 + H2O = 3,7-dimethylocta-2,6-dienoate + H2O2 + H(+). The catalysed reaction is acrolein + O2 + H2O = acrylate + H2O2 + H(+). It catalyses the reaction (E)-4-hydroxynon-2-enal + O2 + H2O = (E)-4-hydroxynon-2-enoate + H2O2 + H(+). It carries out the reaction (E)-cinnamaldehyde + O2 + H2O = (E)-cinnamate + H2O2 + H(+). The enzyme catalyses indole-3-carbaldehyde + O2 + H2O = indole-3-carboxylate + H2O2 + H(+). The catalysed reaction is propanal + O2 + H2O = propanoate + H2O2 + H(+). It catalyses the reaction dodecanal + O2 + H2O = dodecanoate + H2O2 + H(+). It carries out the reaction salicylaldehyde + O2 + H2O = salicylate + H2O2 + H(+). Inhibited by Cu(2+). Its function is as follows. Aldehyde oxidase with a broad substrate specificity. Involved in the accumulation of benzoic acid (BA) in siliques. Delays and protects siliques from senescence by catalyzing aldehyde detoxification in siliques. Catalyzes the oxidation of an array of aromatic and aliphatic aldehydes, including vanillin and the reactive carbonyl species (RCS) acrolein, 4-hydroxyl-2-nonenal (HNE), and malondialdehyde (MDA). The protein is Aldehyde oxidase 4 of Arabidopsis thaliana (Mouse-ear cress).